We begin with the raw amino-acid sequence, 2832 residues long: Cyclic beta-(1,2)-glucan synthase NdvB (2832 aa).

Transmembrane regions (helical) follow at residues 411 to 431 (FAIAGPNILLTILAMIVVYAF), 444 to 464 (IMLLLFALPASEGAMGLFNTV), 810 to 830 (LIPVAWLAASVMGWYYMEPTP), 831 to 851 (ALIWQLVLIFSLFVAPTLSLI), 880 to 900 (QVALRIVFIAHNAAMMADAIV), 938 to 958 (WTAPALALVSLALAAISDTGL), and 959 to 979 (PFIGLPFALIWAASPAVAWFV). The region spanning 1299–1506 (LASEARLTSL…NGQLREWFHA (208 aa)) is the Glycoamylase-like domain.

It belongs to the NdvB family.

The protein resides in the cell inner membrane. It carries out the reaction [(1-&gt;2)-beta-D-glucosyl](n) + UDP-alpha-D-glucose = [(1-&gt;2)-beta-D-glucosyl](n+1) + UDP + H(+). Functionally, involved in the biosynthesis of cyclic beta-(1,2)-glucan. It seems that NdvB is involved in three enzymatic activities. First, it may catalyze the transfer of the first glucose from UDP-Glc to an unknown amino acid. In the second enzymatic activity (UDP-Glc:beta-(1,2) oligosaccharide glucosyltransferase), it may be responsible for chain elongation. Finally, in the third activity, it may catalyze glucan cyclization and release from the protein. NdvB is also involved in nodule invasion and in bacteroid development. The sequence is that of Cyclic beta-(1,2)-glucan synthase NdvB from Rhizobium meliloti (strain 1021) (Ensifer meliloti).